Consider the following 199-residue polypeptide: Probable thymidylate kinase (199 aa).

An ATP-binding site is contributed by 13–20; that stretch reads GIDGAGKT.

Belongs to the thymidylate kinase family.

It carries out the reaction dTMP + ATP = dTDP + ADP. The sequence is that of Probable thymidylate kinase from Staphylothermus marinus (strain ATCC 43588 / DSM 3639 / JCM 9404 / F1).